Consider the following 576-residue polypeptide: MSNESTRVTVSRGCTASDECAQALERTNDELDRESSVSESRSDEESHEKLSRRRFPTLGIGIWLDLKDRIPYYKSDWVDAFNYRVIPSIVDTYFNNLLPAIAFAQDMFDRTDNSYGVNEVLLSSAMAGIVFGVLGGQPLCIVGVTGPISIFNYTVYEIIKPLNTSYFGFMFWICMWSMIFHLVLAFTNAVCLLQYVTTFPCDIFGLFINVVYIQKGIQILTRQFSAKSGEKSVQDGFASVVVALVMTAFGLFFKLFHYYPLFSHRIRTFISDYSTALSVLFWSSFTHFGGYLHDVKFKKLPITKAFFPTSKVNRPQNTWLAYEPIPVKDVFIALPFGIFLTILFYFDHNVSSLMAQRHQYKLKKPSSFHYDFALLGLTTCISGVLGIPAPNGLIPQAPLHTETLLVRDSNQKVISCVEQRFTNTFQGLMILGTMTRPLLVCLGEIPQAVLSGLFFIMGINGLMTNSIIQRLVFLFSDPNRRDNTSPLMKVSKKSMLIFLSFSLTGFAGEFAITNTIAAIGFPLVLLLSVLVSFSFAYIFPTEELKILDTNVAQKFTIKNLLLENIRDAKFCDKHED.

At 1 to 84 (MSNESTRVTV…SDWVDAFNYR (84 aa)) the chain is on the cytoplasmic side. Residues 19–48 (ECAQALERTNDELDRESSVSESRSDEESHE) are disordered. Basic and acidic residues predominate over residues 26–48 (RTNDELDRESSVSESRSDEESHE). The chain crosses the membrane as a helical span at residues 85–105 (VIPSIVDTYFNNLLPAIAFAQ). Over 106 to 116 (DMFDRTDNSYG) the chain is Extracellular. A helical membrane pass occupies residues 117–134 (VNEVLLSSAMAGIVFGVL). Residues 135 to 140 (GGQPLC) are Cytoplasmic-facing. A helical membrane pass occupies residues 141 to 160 (IVGVTGPISIFNYTVYEIIK). Residues 161 to 165 (PLNTS) are Extracellular-facing. The helical transmembrane segment at 166 to 186 (YFGFMFWICMWSMIFHLVLAF) threads the bilayer. At 187–192 (TNAVCL) the chain is on the cytoplasmic side. A helical membrane pass occupies residues 193 to 213 (LQYVTTFPCDIFGLFINVVYI). The Extracellular segment spans residues 214–235 (QKGIQILTRQFSAKSGEKSVQD). A helical membrane pass occupies residues 236–256 (GFASVVVALVMTAFGLFFKLF). At 257–274 (HYYPLFSHRIRTFISDYS) the chain is on the cytoplasmic side. Residues 275–295 (TALSVLFWSSFTHFGGYLHDV) form a helical membrane-spanning segment. Residues 296-329 (KFKKLPITKAFFPTSKVNRPQNTWLAYEPIPVKD) are Extracellular-facing. A helical membrane pass occupies residues 330–350 (VFIALPFGIFLTILFYFDHNV). Residues 351–373 (SSLMAQRHQYKLKKPSSFHYDFA) lie on the Cytoplasmic side of the membrane. The chain crosses the membrane as a helical span at residues 374–394 (LLGLTTCISGVLGIPAPNGLI). At 395–438 (PQAPLHTETLLVRDSNQKVISCVEQRFTNTFQGLMILGTMTRPL) the chain is on the extracellular side. The chain crosses the membrane as a helical span at residues 439–459 (LVCLGEIPQAVLSGLFFIMGI). Topologically, residues 460 to 495 (NGLMTNSIIQRLVFLFSDPNRRDNTSPLMKVSKKSM) are cytoplasmic. The helical transmembrane segment at 496–516 (LIFLSFSLTGFAGEFAITNTI) threads the bilayer. At 517–518 (AA) the chain is on the extracellular side. A helical transmembrane segment spans residues 519–539 (IGFPLVLLLSVLVSFSFAYIF). Over 540–576 (PTEELKILDTNVAQKFTIKNLLLENIRDAKFCDKHED) the chain is Cytoplasmic.

This sequence belongs to the anion exchanger (TC 2.A.31) family.

The protein resides in the cell membrane. It localises to the vacuole membrane. Its function is as follows. Functions in boric acid/borate export across the plasma membrane, and thereby protects yeast cells from boron toxicity. Involved in the trafficking of proteins to the vacuole. This chain is Boron transporter 1 (BOR1), found in Saccharomyces cerevisiae (strain ATCC 204508 / S288c) (Baker's yeast).